A 493-amino-acid polypeptide reads, in one-letter code: MILNSLSLCYHNKLILAPMVRVGTLPMRLLALDYGADIVYCEELIDLKMIQCKRVVNEVLSTVDFVAPDDRVVFRTCEREQNRVVFQMGTSDAERALAVARLVENDVAGIDVNMGCPKQYSTKGGMGAALLSDPDKIEKILSTLVKGTRRPVTCKIRILPSLEDTLSLVKRIERTGIAAIAVHGRKREERPQHPVSCEVIKAIADTLSIPVIANGGSHDHIQQYSDIEDFRQATAASSVMVARAAMWNPSIFLKEGLRPLEEVMQKYIRYAVQYDNHYTNTKYCLCQMLREQLESPQGRLLHAAQSSREICEAFGLGAFYEETTQELDAQQARLSAKTSEQTGEPAEDTSGVIKMAVKFDRRAYPAQITPKMCLLEWCRREKLAQPVYETVQRPLDRLFSSIVTVAEQKYQSTLWDKSKKLAEQAAAIVCLRSQGLPEGRLGEESPSLHKRKREAPDQDPGGPRAQELAQPGDLCKKPFVALGSGEESPLEGW.

The interval 1–333 (MILNSLSLCY…TQELDAQQAR (333 aa)) is catalytic domain. Residues 18-20 (PMV), glutamate 43, and glutamine 87 each bind FMN. Catalysis depends on cysteine 116, which acts as the Proton donor. FMN contacts are provided by residues lysine 155, histidine 183, 214-216 (NGG), and 242-243 (AR). Residues 330 to 342 (QQARLSAKTSEQT) are compositionally biased toward polar residues. A disordered region spans residues 330 to 349 (QQARLSAKTSEQTGEPAEDT). 2 interaction with tRNA regions span residues 367–371 (QITPK) and 420–424 (KLAEQ). A DRBM domain is found at 369–436 (TPKMCLLEWC…AIVCLRSQGL (68 aa)). The segment at 438-493 (EGRLGEESPSLHKRKREAPDQDPGGPRAQELAQPGDLCKKPFVALGSGEESPLEGW) is disordered. Residues serine 445 and serine 488 each carry the phosphoserine modification.

The protein belongs to the Dus family. Dus2 subfamily. As to quaternary structure, interacts with EPRS1. Interacts (via DRBM domain) with PRKRA and EIF2AK2/PKR (via DRBM 1 domain). Requires FMN as cofactor. As to expression, weak expression in heart, placenta and skeletal muscle. Up-regulated in most lung cancer cells (at protein level).

It localises to the cytoplasm. The protein resides in the endoplasmic reticulum. The enzyme catalyses 5,6-dihydrouridine(20) in tRNA + NADP(+) = uridine(20) in tRNA + NADPH + H(+). Inhibited by canertinib, PD 168393, AST-1306 and PF-6274484. Catalyzes the NADPH-dependent synthesis of dihydrouridine, a modified base found in the D-loop of most tRNAs. Specifically modifies U20 in cytoplasmic tRNAs. Activity depends on the presence of guanosine at position 19 in the tRNA substrate. Negatively regulates the activation of EIF2AK2/PKR. This Homo sapiens (Human) protein is tRNA-dihydrouridine(20) synthase [NAD(P)+]-like (DUS2).